The chain runs to 291 residues: Nucleotide-binding protein LJ_0866 (291 aa).

13–20 contacts ATP; the sequence is GMSGAGKT. Residue 63–66 participates in GTP binding; that stretch reads DLRV.

This sequence belongs to the RapZ-like family.

Its function is as follows. Displays ATPase and GTPase activities. The protein is Nucleotide-binding protein LJ_0866 of Lactobacillus johnsonii (strain CNCM I-12250 / La1 / NCC 533).